A 39-amino-acid polypeptide reads, in one-letter code: APRLPQCQGDDQEKCLCNKDECPPGQCRFPRGDADPYCE.

The tract at residues 27–38 is high affinity binding domain; that stretch reads CRFPRGDADPYC. A Cell attachment site motif is present at residues 31–33; that stretch reads RGD.

It belongs to the ornatin family.

The protein localises to the secreted. In terms of biological role, inhibits fibrinogen interaction with platelet receptors expressed on glycoprotein IIb-IIIa complex. May prevent blood from clotting during either feeding and/or storage of ingested blood. This chain is Decorsin, found in Macrobdella decora (North American leech).